The primary structure comprises 181 residues: Large ribosomal subunit protein uL5 (181 aa).

Belongs to the universal ribosomal protein uL5 family. Part of the 50S ribosomal subunit; part of the 5S rRNA/L5/L18/L25 subcomplex. Contacts the 5S rRNA and the P site tRNA. Forms a bridge to the 30S subunit in the 70S ribosome.

This is one of the proteins that bind and probably mediate the attachment of the 5S RNA into the large ribosomal subunit, where it forms part of the central protuberance. In the 70S ribosome it contacts protein S13 of the 30S subunit (bridge B1b), connecting the 2 subunits; this bridge is implicated in subunit movement. Contacts the P site tRNA; the 5S rRNA and some of its associated proteins might help stabilize positioning of ribosome-bound tRNAs. This Campylobacter lari (strain RM2100 / D67 / ATCC BAA-1060) protein is Large ribosomal subunit protein uL5.